Here is a 160-residue protein sequence, read N- to C-terminus: Troponin C, skeletal muscle (160 aa).

EF-hand domains lie at 15–50 (EMIA…LGQN), 51–86 (PTRE…QLKE), 91–126 (KSEE…SGEP), and 127–160 (VSEE…ENIQ). The Ca(2+) site is built by aspartate 28, aspartate 30, aspartate 34, glutamate 39, aspartate 64, aspartate 66, serine 68, threonine 70, glutamate 75, aspartate 104, asparagine 106, aspartate 108, glutamate 115, aspartate 140, asparagine 142, aspartate 144, lysine 146, and glutamate 151.

Belongs to the troponin C family.

In terms of biological role, troponin is the central regulatory protein of striated muscle contraction. Tn consists of three components: Tn-I which is the inhibitor of actomyosin ATPase, Tn-T which contains the binding EF-hand for tropomyosin and Tn-C. The binding of calcium to Tn-C abolishes the inhibitory action of Tn on actin filaments. This is Troponin C, skeletal muscle from Anguilla anguilla (European freshwater eel).